The primary structure comprises 101 residues: Small ribosomal subunit protein uS14 (101 aa).

The protein belongs to the universal ribosomal protein uS14 family. In terms of assembly, part of the 30S ribosomal subunit. Contacts proteins S3 and S10.

In terms of biological role, binds 16S rRNA, required for the assembly of 30S particles and may also be responsible for determining the conformation of the 16S rRNA at the A site. The protein is Small ribosomal subunit protein uS14 of Polynucleobacter necessarius subsp. necessarius (strain STIR1).